We begin with the raw amino-acid sequence, 505 residues long: Protein nucleotidyltransferase YdiU (505 aa).

Residues Gly-102, Gly-104, Arg-105, Lys-125, Asp-137, Gly-138, Arg-188, and Arg-195 each coordinate ATP. Asp-264 acts as the Proton acceptor in catalysis. 2 residues coordinate Mg(2+): Asn-265 and Asp-274. ATP is bound at residue Asp-274. Residues 485–505 (FADYGKPPAPGEEVQQTFCGT) form a disordered region.

It belongs to the SELO family. Mg(2+) serves as cofactor. The cofactor is Mn(2+).

The enzyme catalyses L-seryl-[protein] + ATP = 3-O-(5'-adenylyl)-L-seryl-[protein] + diphosphate. The catalysed reaction is L-threonyl-[protein] + ATP = 3-O-(5'-adenylyl)-L-threonyl-[protein] + diphosphate. It carries out the reaction L-tyrosyl-[protein] + ATP = O-(5'-adenylyl)-L-tyrosyl-[protein] + diphosphate. It catalyses the reaction L-histidyl-[protein] + UTP = N(tele)-(5'-uridylyl)-L-histidyl-[protein] + diphosphate. The enzyme catalyses L-seryl-[protein] + UTP = O-(5'-uridylyl)-L-seryl-[protein] + diphosphate. The catalysed reaction is L-tyrosyl-[protein] + UTP = O-(5'-uridylyl)-L-tyrosyl-[protein] + diphosphate. In terms of biological role, nucleotidyltransferase involved in the post-translational modification of proteins. It can catalyze the addition of adenosine monophosphate (AMP) or uridine monophosphate (UMP) to a protein, resulting in modifications known as AMPylation and UMPylation. This is Protein nucleotidyltransferase YdiU from Nitrobacter hamburgensis (strain DSM 10229 / NCIMB 13809 / X14).